Here is a 101-residue protein sequence, read N- to C-terminus: Small ribosomal subunit protein bS18c (101 aa).

It belongs to the bacterial ribosomal protein bS18 family. As to quaternary structure, part of the 30S ribosomal subunit.

The protein resides in the plastid. The protein localises to the chloroplast. The chain is Small ribosomal subunit protein bS18c from Lepidium virginicum (Virginia pepperweed).